Consider the following 620-residue polypeptide: Chaperone protein DnaK (620 aa).

The residue at position 174 (T174) is a Phosphothreonine; by autocatalysis. A disordered region spans residues 590-620 (AAGAGPDMSGAGPQGDTYAGDDVVDGDYREV).

The protein belongs to the heat shock protein 70 family.

Functionally, acts as a chaperone. The sequence is that of Chaperone protein DnaK from Lachnoclostridium phytofermentans (strain ATCC 700394 / DSM 18823 / ISDg) (Clostridium phytofermentans).